A 186-amino-acid chain; its full sequence is Temperature-induced lipocalin-1 (186 aa).

The HPR (Hydrophobic proline-rich) motif lies at 90–97; that stretch reads PPFLPIIP. Positions 154–174 are disordered; the sequence is KLHKTPQSDTPPESNTAPEDS. Positions 158-171 are enriched in polar residues; that stretch reads TPQSDTPPESNTAP.

It belongs to the calycin superfamily. Lipocalin family. As to expression, expressed ubiquitously at similar levels, except in dry seeds (at protein level). Present in seeds.

The protein resides in the cell membrane. It is found in the cytoplasm. It localises to the plastid. Its subcellular location is the chloroplast membrane. In terms of biological role, involved in basal (BT) and acquired thermotolerance (AT), probably by preventing plasma membrane lipids peroxidation induced by severe heat-shock (HS). Lipocalin that confers protection against oxidative stress caused by heat, freezing, paraquat and light. Confers resistance to high salt (NaCl) levels, probably by protecting chloroplasts from ion toxicity via ion homeostasis maintenance. Required for seed longevity by ensuring polyunsaturated lipids integrity. The sequence is that of Temperature-induced lipocalin-1 from Arabidopsis thaliana (Mouse-ear cress).